Reading from the N-terminus, the 247-residue chain is GTP cyclohydrolase 1 type 2 homolog (247 aa).

A divalent metal cation-binding residues include H63, H64, D101, H215, and E219.

Belongs to the GTP cyclohydrolase I type 2/NIF3 family. As to quaternary structure, homohexamer.

The polypeptide is GTP cyclohydrolase 1 type 2 homolog (Buchnera aphidicola subsp. Baizongia pistaciae (strain Bp)).